Here is a 225-residue protein sequence, read N- to C-terminus: Orotate phosphoribosyltransferase (225 aa).

5-phospho-alpha-D-ribose 1-diphosphate contacts are provided by residues Lys-26, 73–74 (YK), Arg-100, Lys-101, Lys-104, His-106, and 127–135 (EDVTTAGTS). Orotate-binding residues include Thr-131 and Arg-160.

The protein belongs to the purine/pyrimidine phosphoribosyltransferase family. PyrE subfamily. Homodimer. Mg(2+) is required as a cofactor.

It catalyses the reaction orotidine 5'-phosphate + diphosphate = orotate + 5-phospho-alpha-D-ribose 1-diphosphate. It participates in pyrimidine metabolism; UMP biosynthesis via de novo pathway; UMP from orotate: step 1/2. In terms of biological role, catalyzes the transfer of a ribosyl phosphate group from 5-phosphoribose 1-diphosphate to orotate, leading to the formation of orotidine monophosphate (OMP). This chain is Orotate phosphoribosyltransferase, found in Lachnoclostridium phytofermentans (strain ATCC 700394 / DSM 18823 / ISDg) (Clostridium phytofermentans).